Here is a 471-residue protein sequence, read N- to C-terminus: 7-dehydrocholesterol reductase (471 aa).

Transmembrane regions (helical) follow at residues 36-56 (LVSVIFLLLFAPFIVYYFIMA), 95-115 (LYALWVSFQVLLYSWLPDFCH), 144-164 (LQAWLITHFLWFVNAYLLSWF), 173-193 (WIPLLWCANILGYAVSTFAMI), 233-253 (LFFNGRPGIVAWTLINLSFAA), 262-282 (VTNSMILVNVLQAIYVLDFFW), 302-322 (LGWGDCVWLPYLYTLQGLYLV), and 327-347 (QLSTPNALGVLLLGLVGYYIF). Residues K354, R358, L391, W396, and 403–404 (NY) contribute to the NADP(+) site. A helical transmembrane segment spans residues 416–436 (LACGGGHLLPYFYIIYMTILL). NADP(+)-binding positions include D443, 447-451 (CANKY), and Y458.

Belongs to the ERG4/ERG24 family. In terms of assembly, interacts with DHCR24; this interaction regulates DHCR7 activity. Interacts with TMEM147. Highest expression is detected in liver, followed by kidney and brain.

Its subcellular location is the endoplasmic reticulum membrane. The catalysed reaction is cholesterol + NADP(+) = 7-dehydrocholesterol + NADPH + H(+). The enzyme catalyses 7-dehydrodesmosterol + NADPH + H(+) = desmosterol + NADP(+). It carries out the reaction 5,6alpha-epoxy-5alpha-cholestan-3beta-ol + H2O = 5alpha-cholestane-3beta,5,6beta-triol. It catalyses the reaction 5,6beta-epoxy-5beta-cholestan-3beta-ol + H2O = 5alpha-cholestane-3beta,5,6beta-triol. Its pathway is steroid biosynthesis; cholesterol biosynthesis. Functionally, oxidoreductase that catalyzes the last step of the cholesterol synthesis pathway, which transforms cholesta-5,7-dien-3beta-ol (7-dehydrocholesterol,7-DHC) into cholesterol by reducing the C7-C8 double bond of its sterol core. Can also metabolize cholesta-5,7,24-trien-3beta-ol (7-dehydrodemosterol, 7-DHD) to desmosterol, which is then metabolized by the Delta(24)-sterol reductase (DHCR24) to cholesterol. Modulates ferroptosis (a form of regulated cell death driven by iron-dependent lipid peroxidation) through the metabolic breakdown of the anti-ferroptotic metabolites 7-DHC and 7-DHD which, when accumulated, divert the propagation of peroxyl radical-mediated damage from phospholipid components to its sterol core, protecting plasma and mitochondrial membranes from phospholipid autoxidation. In terms of biological role, component of the microsomal antiestrogen binding site (AEBS), a multiproteic complex at the ER membrane that consists of an association between cholestenol Delta-isomerase/EBP and DHCR7. This complex is responsible for cholesterol-5,6-epoxide hydrolase (ChEH) activity, which consists in the hydration of cholesterol-5,6-epoxides (5,6-EC) into cholestane-3beta,5alpha,6beta-triol (CT). The precise role of each component of this complex has not been described yet. The sequence is that of 7-dehydrocholesterol reductase (Dhcr7) from Rattus norvegicus (Rat).